The primary structure comprises 275 residues: Alpha carbonic anhydrase 7 (275 aa).

Positions 1–27 are cleaved as a signal peptide; the sequence is MVNYSSISCIFFVALFSIFTIVSISSA. N-linked (GlcNAc...) asparagine glycans are attached at residues asparagine 3 and asparagine 96. Residues 38-272 form the Alpha-carbonic anhydrase domain; that stretch reads REFNYKKNDE…TNKRIVHLYR (235 aa). Cysteine 63 and cysteine 222 are joined by a disulfide. Catalysis depends on histidine 104, which acts as the Proton acceptor. Zn(2+) contacts are provided by histidine 130, histidine 132, and histidine 149. 218-219 is a binding site for substrate; that stretch reads TT. N-linked (GlcNAc...) asparagine glycosylation occurs at asparagine 225.

It belongs to the alpha-class carbonic anhydrase family. Requires Zn(2+) as cofactor. Post-translationally, N-glycosylated.

It is found in the plastid. Its subcellular location is the chloroplast stroma. The catalysed reaction is hydrogencarbonate + H(+) = CO2 + H2O. In terms of biological role, reversible hydration of carbon dioxide. This is Alpha carbonic anhydrase 7 (ACA7) from Arabidopsis thaliana (Mouse-ear cress).